The following is a 415-amino-acid chain: Esterase FrsA (415 aa).

This sequence belongs to the FrsA family.

The enzyme catalyses a carboxylic ester + H2O = an alcohol + a carboxylate + H(+). Its function is as follows. Catalyzes the hydrolysis of esters. In Yersinia pseudotuberculosis serotype O:1b (strain IP 31758), this protein is Esterase FrsA.